The sequence spans 242 residues: 1-(5-phosphoribosyl)-5-[(5-phosphoribosylamino)methylideneamino] imidazole-4-carboxamide isomerase (242 aa).

Catalysis depends on D8, which acts as the Proton acceptor. The Proton donor role is filled by D129.

Belongs to the HisA/HisF family.

The protein resides in the cytoplasm. The enzyme catalyses 1-(5-phospho-beta-D-ribosyl)-5-[(5-phospho-beta-D-ribosylamino)methylideneamino]imidazole-4-carboxamide = 5-[(5-phospho-1-deoxy-D-ribulos-1-ylimino)methylamino]-1-(5-phospho-beta-D-ribosyl)imidazole-4-carboxamide. Its pathway is amino-acid biosynthesis; L-histidine biosynthesis; L-histidine from 5-phospho-alpha-D-ribose 1-diphosphate: step 4/9. The protein is 1-(5-phosphoribosyl)-5-[(5-phosphoribosylamino)methylideneamino] imidazole-4-carboxamide isomerase of Syntrophus aciditrophicus (strain SB).